The chain runs to 381 residues: Carbamoyl phosphate synthase small chain (381 aa).

Residues 1–192 are CPSase; it reads MSKPAILALE…SGYADVSQGD (192 aa). 3 residues coordinate L-glutamine: serine 47, glycine 244, and glycine 246. Residues 196–381 form the Glutamine amidotransferase type-1 domain; sequence HVVAYDYGMK…RFVEMMRHRR (186 aa). Cysteine 272 serves as the catalytic Nucleophile. Positions 273, 276, 314, 316, and 317 each coordinate L-glutamine. Active-site residues include histidine 356 and glutamate 358.

The protein belongs to the CarA family. Composed of two chains; the small (or glutamine) chain promotes the hydrolysis of glutamine to ammonia, which is used by the large (or ammonia) chain to synthesize carbamoyl phosphate. Tetramer of heterodimers (alpha,beta)4.

It catalyses the reaction hydrogencarbonate + L-glutamine + 2 ATP + H2O = carbamoyl phosphate + L-glutamate + 2 ADP + phosphate + 2 H(+). The enzyme catalyses L-glutamine + H2O = L-glutamate + NH4(+). It participates in amino-acid biosynthesis; L-arginine biosynthesis; carbamoyl phosphate from bicarbonate: step 1/1. It functions in the pathway pyrimidine metabolism; UMP biosynthesis via de novo pathway; (S)-dihydroorotate from bicarbonate: step 1/3. In terms of biological role, small subunit of the glutamine-dependent carbamoyl phosphate synthetase (CPSase). CPSase catalyzes the formation of carbamoyl phosphate from the ammonia moiety of glutamine, carbonate, and phosphate donated by ATP, constituting the first step of 2 biosynthetic pathways, one leading to arginine and/or urea and the other to pyrimidine nucleotides. The small subunit (glutamine amidotransferase) binds and cleaves glutamine to supply the large subunit with the substrate ammonia. The sequence is that of Carbamoyl phosphate synthase small chain from Halomonas eurihalina.